Consider the following 147-residue polypeptide: Large ribosomal subunit protein uL15 (147 aa).

The interval 1–62 (MKLHELKPAQ…GQQPLSRRMP (62 aa)) is disordered. 2 stretches are compositionally biased toward gly residues: residues 21 to 31 (RGIGSGTGKTS) and 42 to 52 (AGGGVRPGFEG).

This sequence belongs to the universal ribosomal protein uL15 family. Part of the 50S ribosomal subunit.

Functionally, binds to the 23S rRNA. In Desulfitobacterium hafniense (strain DSM 10664 / DCB-2), this protein is Large ribosomal subunit protein uL15.